A 397-amino-acid polypeptide reads, in one-letter code: Acetate kinase (397 aa).

N8 provides a ligand contact to Mg(2+). K15 is an ATP binding site. Residue R90 coordinates substrate. D147 functions as the Proton donor/acceptor in the catalytic mechanism. Residues 207-211 (HLGAG), 283-285 (DMR), and 330-334 (GVGEN) each bind ATP. Residue E383 coordinates Mg(2+).

This sequence belongs to the acetokinase family. As to quaternary structure, homodimer. Requires Mg(2+) as cofactor. It depends on Mn(2+) as a cofactor.

It localises to the cytoplasm. The enzyme catalyses acetate + ATP = acetyl phosphate + ADP. It participates in metabolic intermediate biosynthesis; acetyl-CoA biosynthesis; acetyl-CoA from acetate: step 1/2. In terms of biological role, catalyzes the formation of acetyl phosphate from acetate and ATP. Can also catalyze the reverse reaction. This is Acetate kinase from Fructilactobacillus sanfranciscensis (Lactobacillus sanfranciscensis).